The sequence spans 302 residues: Putative S-adenosyl-L-methionine-dependent methyltransferase MMAR_1068 (302 aa).

Residues Asp-127 and Asp-156–Leu-157 each bind S-adenosyl-L-methionine.

It belongs to the UPF0677 family.

Functionally, exhibits S-adenosyl-L-methionine-dependent methyltransferase activity. The polypeptide is Putative S-adenosyl-L-methionine-dependent methyltransferase MMAR_1068 (Mycobacterium marinum (strain ATCC BAA-535 / M)).